The chain runs to 61 residues: Large ribosomal subunit protein uL30 (61 aa).

Belongs to the universal ribosomal protein uL30 family. As to quaternary structure, part of the 50S ribosomal subunit.

The protein is Large ribosomal subunit protein uL30 of Clostridioides difficile (strain 630) (Peptoclostridium difficile).